A 287-amino-acid polypeptide reads, in one-letter code: Cbb3-type cytochrome c oxidase subunit FixPc (287 aa).

Over 1–36 (MSEKHIDEFSGVETTGHEWDGIRELNNPMPRWWVWT) the chain is Cytoplasmic. Residues 37 to 57 (FYATIVWALGYAIAYPAIPMI) form a helical membrane-spanning segment. At 58–287 (TDATKGMLGF…IFVHSLGGGT (230 aa)) the chain is on the periplasmic side. 2 consecutive Cytochrome c domains span residues 108-196 (FAIA…WGLT) and 203-284 (GLAE…HSLG). Residues cysteine 121, cysteine 124, histidine 125, methionine 173, cysteine 216, cysteine 219, histidine 220, and methionine 261 each coordinate heme c.

The protein belongs to the CcoP / FixP family. In terms of assembly, component of the cbb3-type cytochrome c oxidase at least composed of FixN, FixO, FixQ and FixP. The cofactor is heme c.

The protein resides in the cell inner membrane. The protein operates within energy metabolism; oxidative phosphorylation. Its function is as follows. C-type cytochrome. Part of the cbb3-type cytochrome c oxidase complex. FixP subunit is required for transferring electrons from donor cytochrome c via its heme groups to FixO subunit. From there, electrons are shuttled to the catalytic binuclear center of FixN subunit where oxygen reduction takes place. The complex also functions as a proton pump. The sequence is that of Cbb3-type cytochrome c oxidase subunit FixPc from Rhizobium leguminosarum bv. viciae.